We begin with the raw amino-acid sequence, 90 residues long: Acylphosphatase (90 aa).

The Acylphosphatase-like domain maps to 5-90 (SFVVRVWGLV…PPKGSGFHTN (86 aa)). Active-site residues include Arg-20 and Asn-38.

Belongs to the acylphosphatase family.

The catalysed reaction is an acyl phosphate + H2O = a carboxylate + phosphate + H(+). The polypeptide is Acylphosphatase (acyP) (Aeromonas hydrophila subsp. hydrophila (strain ATCC 7966 / DSM 30187 / BCRC 13018 / CCUG 14551 / JCM 1027 / KCTC 2358 / NCIMB 9240 / NCTC 8049)).